The chain runs to 970 residues: UvrABC system protein A (970 aa).

34 to 41 serves as a coordination point for ATP; sequence GVSGSGKS. The C4-type zinc-finger motif lies at 284 to 311; sequence CPEHGAVMDELSPRLFSFNSPYGACPDC. ABC transporter domains are found at residues 340 to 617 and 637 to 965; these read WSEK…QRSL and GNGA…KYLA. 669–676 serves as a coordination point for ATP; the sequence is GVSGSGKS. The C4-type zinc-finger motif lies at 768 to 794; that stretch reads CEACAGQGVNVIEMNFLPDVYVQCDVC.

This sequence belongs to the ABC transporter superfamily. UvrA family. Forms a heterotetramer with UvrB during the search for lesions.

The protein localises to the cytoplasm. The UvrABC repair system catalyzes the recognition and processing of DNA lesions. UvrA is an ATPase and a DNA-binding protein. A damage recognition complex composed of 2 UvrA and 2 UvrB subunits scans DNA for abnormalities. When the presence of a lesion has been verified by UvrB, the UvrA molecules dissociate. This is UvrABC system protein A from Synechocystis sp. (strain ATCC 27184 / PCC 6803 / Kazusa).